The chain runs to 970 residues: Sodium/calcium exchanger 1 (970 aa).

Positions 1 to 32 (MLRLSLPPNVSMGFRLVALVALLFSHVDHITA) are cleaved as a signal peptide. Residues 33–71 (DTEAETGGNETTECTGSYYCKKGVILPIWEPQDPSFGDK) lie on the Extracellular side of the membrane. A glycan (N-linked (GlcNAc...) asparagine) is linked at asparagine 41. A helical transmembrane segment spans residues 72–92 (IARATVYFVAMVYMFLGVSII). Residues 93–133 (ADRFMSSIEVITSQEKEITIKKPNGETTKTTVRIWNETVSN) lie on the Cytoplasmic side of the membrane. The helical transmembrane segment at 134 to 154 (LTLMALGSSAPEILLSVIEVC) threads the bilayer. An Alpha-1 repeat occupies 138–178 (ALGSSAPEILLSVIEVCGHNFTAGDLGPSTIVGSAAFNMFI). Residues 155 to 167 (GHNFTAGDLGPST) are Extracellular-facing. Asparagine 157 is a glycosylation site (N-linked (GlcNAc...) asparagine). The helical transmembrane segment at 168–188 (IVGSAAFNMFIIIALCVYVVP) threads the bilayer. The Cytoplasmic portion of the chain corresponds to 189–201 (DGETRKIKHLRVF). Residues 202 to 222 (FVTAAWSIFAYTWLYIILSVS) traverse the membrane as a helical segment. At 223–228 (SPGVVE) the chain is on the extracellular side. The helical transmembrane segment at 229–249 (VWEGLLTFFFFPICVVFAWVA) threads the bilayer. Topologically, residues 250–797 (DRRLLFYKYV…FVPPTEYWNG (548 aa)) are cytoplasmic. Positions 251 to 270 (RRLLFYKYVYKRYRAGKQRG) are putative calmodulin-binding region. Phosphoserine occurs at positions 282 and 389. Calx-beta domains are found at residues 393–493 (VNME…VHLS) and 524–624 (ATIT…IEIG). Glutamate 417, aspartate 453, aspartate 478, aspartate 479, isoleucine 481, glutamate 483, glutamate 486, aspartate 530, aspartate 531, aspartate 532, glutamate 548, aspartate 584, aspartate 610, glutamate 611, glutamate 612, and glutamate 715 together coordinate Ca(2+). The helical transmembrane segment at 798-818 (WACFIVSILMIGLLTAFIGDL) threads the bilayer. Over 819-821 (ASH) the chain is Extracellular. A helical transmembrane segment spans residues 822-842 (FGCTIGLKDSVTAVVFVALGT). One copy of the Alpha-2 repeat lies at 839–875 (ALGTSVPDTFASKVAATQDQYADASIGNVTGSNAVNV). Over 843–871 (SVPDTFASKVAATQDQYADASIGNVTGSN) the chain is Cytoplasmic. Residues 872–892 (AVNVFLGIGVAWSIAAIYHAA) form a helical membrane-spanning segment. The Extracellular portion of the chain corresponds to 893–903 (NGEQFKVSPGT). The helical transmembrane segment at 904–924 (LAFSVTLFTIFAFINVGVLLY) threads the bilayer. The Cytoplasmic segment spans residues 925–941 (RRRPEIGGELGGPRTAK). Residues 942–962 (LLTSSLFVLLWLLYIFFSSLE) form a helical membrane-spanning segment. Topologically, residues 963 to 970 (AYCHIKGF) are extracellular.

This sequence belongs to the Ca(2+):cation antiporter (CaCA) (TC 2.A.19) family. SLC8 subfamily. As to expression, detected in heart, kidney and brain (at protein level).

It is found in the cell membrane. It catalyses the reaction Ca(2+)(in) + 3 Na(+)(out) = Ca(2+)(out) + 3 Na(+)(in). Its activity is regulated as follows. Activated by micromolar levels of Ca(2+). Mediates the exchange of one Ca(2+) ion against three to four Na(+) ions across the cell membrane, and thereby contributes to the regulation of cytoplasmic Ca(2+) levels and Ca(2+)-dependent cellular processes. Contributes to Ca(2+) transport during excitation-contraction coupling in muscle. In a first phase, voltage-gated channels mediate the rapid increase of cytoplasmic Ca(2+) levels due to release of Ca(2+) stores from the endoplasmic reticulum. SLC8A1 mediates the export of Ca(2+) from the cell during the next phase, so that cytoplasmic Ca(2+) levels rapidly return to baseline. Required for normal embryonic heart development and the onset of heart contractions. The polypeptide is Sodium/calcium exchanger 1 (Slc8a1) (Mus musculus (Mouse)).